A 350-amino-acid chain; its full sequence is Dihydroorotase (350 aa).

2 residues coordinate Zn(2+): histidine 17 and histidine 19. Substrate-binding positions include 19–21 and asparagine 45; that span reads HLR. Zn(2+) is bound by residues lysine 103, histidine 140, and histidine 178. N6-carboxylysine is present on lysine 103. A substrate-binding site is contributed by histidine 140. Leucine 223 contacts substrate. Aspartate 251 lines the Zn(2+) pocket. Aspartate 251 is an active-site residue. 2 residues coordinate substrate: histidine 255 and alanine 267.

This sequence belongs to the metallo-dependent hydrolases superfamily. DHOase family. Class II DHOase subfamily. As to quaternary structure, homodimer. Zn(2+) is required as a cofactor.

It carries out the reaction (S)-dihydroorotate + H2O = N-carbamoyl-L-aspartate + H(+). The protein operates within pyrimidine metabolism; UMP biosynthesis via de novo pathway; (S)-dihydroorotate from bicarbonate: step 3/3. Catalyzes the reversible cyclization of carbamoyl aspartate to dihydroorotate. In Erwinia tasmaniensis (strain DSM 17950 / CFBP 7177 / CIP 109463 / NCPPB 4357 / Et1/99), this protein is Dihydroorotase.